The sequence spans 433 residues: Cell adhesion molecule 2 (433 aa).

Positions 1 to 24 are cleaved as a signal peptide; the sequence is MILQPSALLCLSSLWGVIVQASQG. The Extracellular portion of the chain corresponds to 25-365; the sequence is QFPVTQNVTV…ALPGPVATDH (341 aa). One can recognise an Ig-like V-type domain in the interval 27-114; it reads PVTQNVTVVE…SLFTMPVKTS (88 aa). 3 N-linked (GlcNAc...) asparagine glycosylation sites follow: asparagine 31, asparagine 41, and asparagine 51. Disulfide bonds link cysteine 44–cysteine 104, cysteine 146–cysteine 203, and cysteine 248–cysteine 296. Ig-like C2-type domains lie at 127–217 and 227–312; these read PHIS…PQIA and PTVR…YVLI. Asparagine 287 and asparagine 291 each carry an N-linked (GlcNAc...) asparagine glycan. Residues 366 to 386 form a helical membrane-spanning segment; the sequence is ALIGGVVAVVVFVTLCSIILI. At 387–433 the chain is on the cytoplasmic side; that stretch reads GRYLARHKGTYLTNEAKGAEDAPDADTAIINAEGSQVNAEEKKEYFI.

It belongs to the nectin family.

The protein localises to the membrane. The protein is Cell adhesion molecule 2 (cadm2) of Xenopus tropicalis (Western clawed frog).